The sequence spans 596 residues: V-type ATP synthase alpha chain (596 aa).

ATP is bound at residue 233 to 240 (GPFGAGKT).

It belongs to the ATPase alpha/beta chains family.

It catalyses the reaction ATP + H2O + 4 H(+)(in) = ADP + phosphate + 5 H(+)(out). In terms of biological role, produces ATP from ADP in the presence of a proton gradient across the membrane. The V-type alpha chain is a catalytic subunit. The sequence is that of V-type ATP synthase alpha chain from Streptococcus sanguinis (strain SK36).